Reading from the N-terminus, the 510-residue chain is ATP synthase subunit alpha (510 aa).

169–176 (GDRQTGKT) serves as a coordination point for ATP.

This sequence belongs to the ATPase alpha/beta chains family. F-type ATPases have 2 components, CF(1) - the catalytic core - and CF(0) - the membrane proton channel. CF(1) has five subunits: alpha(3), beta(3), gamma(1), delta(1), epsilon(1). CF(0) has three main subunits: a(1), b(2) and c(9-12). The alpha and beta chains form an alternating ring which encloses part of the gamma chain. CF(1) is attached to CF(0) by a central stalk formed by the gamma and epsilon chains, while a peripheral stalk is formed by the delta and b chains.

The protein localises to the cell inner membrane. It carries out the reaction ATP + H2O + 4 H(+)(in) = ADP + phosphate + 5 H(+)(out). Functionally, produces ATP from ADP in the presence of a proton gradient across the membrane. The alpha chain is a regulatory subunit. The protein is ATP synthase subunit alpha of Anaeromyxobacter sp. (strain K).